The sequence spans 1078 residues: Cell wall acid trehalase ATC1 (1078 aa).

Positions 1–54 (MAANSSFFLADNCAPHNQSFIQFCIHAASKKKGRIALMCLANLFLLFSFHLLYA) are cleaved as a signal peptide. N-linked (GlcNAc...) asparagine glycosylation is found at asparagine 4, asparagine 17, asparagine 150, asparagine 184, asparagine 242, asparagine 287, asparagine 301, and asparagine 350. 478 to 479 (WD) contacts substrate. 3 N-linked (GlcNAc...) asparagine glycosylation sites follow: asparagine 532, asparagine 591, and asparagine 601. Glutamate 607 serves as the catalytic Proton donor. Residues asparagine 661 and asparagine 670 are each glycosylated (N-linked (GlcNAc...) asparagine). 676–677 (KQ) is a substrate binding site. 8 N-linked (GlcNAc...) asparagine glycosylation sites follow: asparagine 829, asparagine 837, asparagine 904, asparagine 922, asparagine 931, asparagine 946, asparagine 1003, and asparagine 1037.

This sequence belongs to the glycosyl hydrolase 65 family.

The protein localises to the secreted. It is found in the cell wall. The catalysed reaction is alpha,alpha-trehalose + H2O = alpha-D-glucose + beta-D-glucose. In terms of biological role, cell wall acid trehalase that catalyzes hydrolysis of the disaccharide trehalose and required for growth on trehalose as carbon source. Plays a role in dimorphic conversion and virulence. The polypeptide is Cell wall acid trehalase ATC1 (ATC1) (Candida albicans (strain SC5314 / ATCC MYA-2876) (Yeast)).